Consider the following 321-residue polypeptide: Malate dehydrogenase (321 aa).

Residues 10–15 and Asp34 each bind NAD(+); that span reads GAGQIG. Substrate-binding residues include Arg83 and Arg89. Residues Asn96 and 119-121 contribute to the NAD(+) site; that span reads ITN. The substrate site is built by Asn121 and Arg152. His176 serves as the catalytic Proton acceptor.

This sequence belongs to the LDH/MDH superfamily. MDH type 3 family.

The enzyme catalyses (S)-malate + NAD(+) = oxaloacetate + NADH + H(+). Functionally, catalyzes the reversible oxidation of malate to oxaloacetate. This Methylocella silvestris (strain DSM 15510 / CIP 108128 / LMG 27833 / NCIMB 13906 / BL2) protein is Malate dehydrogenase.